We begin with the raw amino-acid sequence, 688 residues long: Potassium-transporting ATPase ATP-binding subunit (688 aa).

The next 4 helical transmembrane spans lie at 37–57 (FLVY…LVGI), 65–85 (ILGI…AEAI), 219–239 (IALQ…TVSL), and 262–282 (VALL…SIGI). Aspartate 313 (4-aspartylphosphate intermediate) is an active-site residue. ATP contacts are provided by residues aspartate 350, glutamate 354, 383 to 390 (FTAKTRMS), and lysine 401. Aspartate 524 and aspartate 528 together coordinate Mg(2+). 3 helical membrane passes run 594 to 614 (FAII…LNIM), 622 to 642 (AIFS…PLAL), and 668 to 688 (IIVP…IGIV).

The protein belongs to the cation transport ATPase (P-type) (TC 3.A.3) family. Type IA subfamily. The system is composed of three essential subunits: KdpA, KdpB and KdpC.

The protein localises to the cell membrane. It carries out the reaction K(+)(out) + ATP + H2O = K(+)(in) + ADP + phosphate + H(+). Functionally, part of the high-affinity ATP-driven potassium transport (or Kdp) system, which catalyzes the hydrolysis of ATP coupled with the electrogenic transport of potassium into the cytoplasm. This subunit is responsible for energy coupling to the transport system and for the release of the potassium ions to the cytoplasm. This chain is Potassium-transporting ATPase ATP-binding subunit, found in Clostridium botulinum (strain Eklund 17B / Type B).